We begin with the raw amino-acid sequence, 912 residues long: Effector protein hopAE1 (912 aa).

Residues 1-13 (MMPSQITRSSHSS) show a composition bias toward polar residues. The interval 1 to 32 (MMPSQITRSSHSSLPEVAPASGDATGVSEQTP) is disordered.

Belongs to the HopW family.

It is found in the secreted. The sequence is that of Effector protein hopAE1 (hopAE1) from Pseudomonas savastanoi pv. phaseolicola (strain 1448A / Race 6) (Pseudomonas syringae pv. phaseolicola (strain 1448A / Race 6)).